Reading from the N-terminus, the 71-residue chain is Large ribosomal subunit protein uL29 (71 aa).

Belongs to the universal ribosomal protein uL29 family.

This is Large ribosomal subunit protein uL29 (rpl29) from Halobacterium salinarum (strain ATCC 700922 / JCM 11081 / NRC-1) (Halobacterium halobium).